We begin with the raw amino-acid sequence, 353 residues long: Sulfate/thiosulfate import ATP-binding protein CysA (353 aa).

The ABC transporter domain occupies 3–237 (IQVKNIEKHF…PATPFVFDFL (235 aa)). 35–42 (GPSGCGKT) serves as a coordination point for ATP.

This sequence belongs to the ABC transporter superfamily. Sulfate/tungstate importer (TC 3.A.1.6) family. The complex is composed of two ATP-binding proteins (CysA), two transmembrane proteins (CysT and CysW) and a solute-binding protein (CysP).

The protein resides in the cell inner membrane. It catalyses the reaction sulfate(out) + ATP + H2O = sulfate(in) + ADP + phosphate + H(+). The catalysed reaction is thiosulfate(out) + ATP + H2O = thiosulfate(in) + ADP + phosphate + H(+). Part of the ABC transporter complex CysAWTP involved in sulfate/thiosulfate import. Responsible for energy coupling to the transport system. This chain is Sulfate/thiosulfate import ATP-binding protein CysA, found in Acinetobacter baylyi (strain ATCC 33305 / BD413 / ADP1).